The primary structure comprises 266 residues: Interleukin-1 beta (266 aa).

The propeptide occupies 1–113; it reads MATVPEPINE…ETSSDELLCD (113 aa).

The protein belongs to the IL-1 family. Monomer. In its precursor form, weakly interacts with full-length MEFV; the mature cytokine does not interact at all. Interacts with integrins ITGAV:ITGBV and ITGA5:ITGB1; integrin-binding is required for IL1B signaling. Interacts with cargo receptor TMED10; the interaction is direct and is required for the secretion of IL1B mature form. Interacts with HSP90AB1; the interaction facilitates cargo translocation into the ERGIC. Interacts with HSP90B1; the interaction facilitates cargo translocation into the ERGIC.

It localises to the cytoplasm. Its subcellular location is the cytosol. The protein localises to the secreted. It is found in the lysosome. The protein resides in the extracellular exosome. In terms of biological role, potent pro-inflammatory cytokine. Initially discovered as the major endogenous pyrogen, induces prostaglandin synthesis, neutrophil influx and activation, T-cell activation and cytokine production, B-cell activation and antibody production, and fibroblast proliferation and collagen production. Promotes Th17 differentiation of T-cells. Synergizes with IL12/interleukin-12 to induce IFNG synthesis from T-helper 1 (Th1) cells. Plays a role in angiogenesis by inducing VEGF production synergistically with TNF and IL6. Involved in transduction of inflammation downstream of pyroptosis: its mature form is specifically released in the extracellular milieu by passing through the gasdermin-D (GSDMD) pore. The chain is Interleukin-1 beta (IL1B) from Capra hircus (Goat).